We begin with the raw amino-acid sequence, 428 residues long: Adenylosuccinate synthetase (428 aa).

Residues 12–18 and 40–42 contribute to the GTP site; these read GDEGKGK and GHT. Aspartate 13 (proton acceptor) is an active-site residue. Positions 13 and 40 each coordinate Mg(2+). Residues 13 to 16, 38 to 41, threonine 131, arginine 145, glutamine 226, threonine 241, and arginine 305 contribute to the IMP site; these read DEGK and NAGH. Catalysis depends on histidine 41, which acts as the Proton donor. Residue 301-307 coordinates substrate; it reads ATTGRKR. GTP is bound by residues arginine 307, 333–335, and 415–417; these read KLD and SVG.

It belongs to the adenylosuccinate synthetase family. Homodimer. The cofactor is Mg(2+).

It localises to the cytoplasm. It carries out the reaction IMP + L-aspartate + GTP = N(6)-(1,2-dicarboxyethyl)-AMP + GDP + phosphate + 2 H(+). It participates in purine metabolism; AMP biosynthesis via de novo pathway; AMP from IMP: step 1/2. Its function is as follows. Plays an important role in the de novo pathway of purine nucleotide biosynthesis. Catalyzes the first committed step in the biosynthesis of AMP from IMP. This Nitratidesulfovibrio vulgaris (strain DSM 19637 / Miyazaki F) (Desulfovibrio vulgaris) protein is Adenylosuccinate synthetase.